Here is a 253-residue protein sequence, read N- to C-terminus: Prepilin leader peptidase/N-methyltransferase (253 aa).

Residues 4-24 form a helical membrane-spanning segment; sequence VYLILFSIVSLILGSFSNVVI. The Zn(2+) site is built by cysteine 48, cysteine 51, cysteine 73, and cysteine 76. The next 6 membrane-spanning stretches (helical) occupy residues 80 to 100, 106 to 126, 129 to 149, 159 to 179, 198 to 218, and 230 to 250; these read ISLS…PIYW, VDSF…VIDF, MLLP…YVQQ, IIGG…VRLF, TLIG…IAFI, and CLYI…FFSI.

This sequence belongs to the peptidase A24 family. It depends on Zn(2+) as a cofactor.

Its subcellular location is the cell inner membrane. It carries out the reaction Typically cleaves a -Gly-|-Phe- bond to release an N-terminal, basic peptide of 5-8 residues from type IV prepilin, and then N-methylates the new N-terminal amino group, the methyl donor being S-adenosyl-L-methionine.. Plays an essential role in type IV pili and type II pseudopili formation by proteolytically removing the leader sequence from substrate proteins and subsequently monomethylating the alpha-amino group of the newly exposed N-terminal phenylalanine. The protein is Prepilin leader peptidase/N-methyltransferase (tcpJ) of Vibrio cholerae serotype O1 (strain ATCC 39315 / El Tor Inaba N16961).